We begin with the raw amino-acid sequence, 53 residues long: Sec-independent protein translocase protein TatA (53 aa).

Residues 1–21 (MGMSLSHLLIVLLIIFVLFGA) traverse the membrane as a helical segment.

Belongs to the TatA/E family. In terms of assembly, the Tat system comprises two distinct complexes: a TatABC complex, containing multiple copies of TatA, TatB and TatC subunits, and a separate TatA complex, containing only TatA subunits. Substrates initially bind to the TatABC complex, which probably triggers association of the separate TatA complex to form the active translocon.

It localises to the cell inner membrane. Functionally, part of the twin-arginine translocation (Tat) system that transports large folded proteins containing a characteristic twin-arginine motif in their signal peptide across membranes. TatA could form the protein-conducting channel of the Tat system. The chain is Sec-independent protein translocase protein TatA from Rickettsia conorii (strain ATCC VR-613 / Malish 7).